Here is a 111-residue protein sequence, read N- to C-terminus: Large ribosomal subunit protein uL22 (111 aa).

Belongs to the universal ribosomal protein uL22 family. As to quaternary structure, part of the 50S ribosomal subunit.

This protein binds specifically to 23S rRNA; its binding is stimulated by other ribosomal proteins, e.g. L4, L17, and L20. It is important during the early stages of 50S assembly. It makes multiple contacts with different domains of the 23S rRNA in the assembled 50S subunit and ribosome. Its function is as follows. The globular domain of the protein is located near the polypeptide exit tunnel on the outside of the subunit, while an extended beta-hairpin is found that lines the wall of the exit tunnel in the center of the 70S ribosome. This is Large ribosomal subunit protein uL22 from Geotalea daltonii (strain DSM 22248 / JCM 15807 / FRC-32) (Geobacter daltonii).